We begin with the raw amino-acid sequence, 465 residues long: Glutamate--tRNA ligase 1 (465 aa).

Residues 8–18 carry the 'HIGH' region motif; sequence PSPTGNLHIGG. The 'KMSKS' region motif lies at 236 to 240; it reads KLSKR. Lys239 serves as a coordination point for ATP.

It belongs to the class-I aminoacyl-tRNA synthetase family. Glutamate--tRNA ligase type 1 subfamily. As to quaternary structure, monomer.

Its subcellular location is the cytoplasm. The catalysed reaction is tRNA(Glu) + L-glutamate + ATP = L-glutamyl-tRNA(Glu) + AMP + diphosphate. Catalyzes the attachment of glutamate to tRNA(Glu) in a two-step reaction: glutamate is first activated by ATP to form Glu-AMP and then transferred to the acceptor end of tRNA(Glu). The protein is Glutamate--tRNA ligase 1 of Wolinella succinogenes (strain ATCC 29543 / DSM 1740 / CCUG 13145 / JCM 31913 / LMG 7466 / NCTC 11488 / FDC 602W) (Vibrio succinogenes).